The primary structure comprises 289 residues: Oxaloacetate decarboxylase (289 aa).

S50 is a binding site for substrate. D88 is a binding site for Mg(2+). Residues R159 and H235 each coordinate substrate.

The protein belongs to the isocitrate lyase family. Oxaloacetate decarboxylase subfamily. As to quaternary structure, homotetramer; dimer of dimers. It depends on Mg(2+) as a cofactor.

The catalysed reaction is oxaloacetate + H(+) = pyruvate + CO2. In terms of biological role, catalyzes the decarboxylation of oxaloacetate into pyruvate. Seems to play a role in maintaining cellular concentrations of bicarbonate and pyruvate. The chain is Oxaloacetate decarboxylase from Pseudomonas fluorescens (strain SBW25).